We begin with the raw amino-acid sequence, 129 residues long: Trefoil factor 2 (129 aa).

The N-terminal stretch at 1–23 (MGPRGAPLLAVVLVLGLHALVEG) is a signal peptide. P-type domains are found at residues 29 to 73 (CRCS…FHPL) and 79 to 122 (EQCV…FFPQ). 7 disulfides stabilise this stretch: Cys29–Cys127, Cys31–Cys58, Cys42–Cys57, Cys52–Cys69, Cys81–Cys107, Cys91–Cys106, and Cys101–Cys118.

As to expression, stomach and pancreas.

Its subcellular location is the secreted. Functionally, inhibits gastrointestinal motility and gastric acid secretion. Could function as a structural component of gastric mucus, possibly by stabilizing glycoproteins in the mucus gel through interactions with carbohydrate side chains. The chain is Trefoil factor 2 (Tff2) from Mus musculus (Mouse).